The chain runs to 266 residues: 4-hydroxy-tetrahydrodipicolinate reductase (266 aa).

Residue 10–15 (GPRGRM) coordinates NAD(+). NADP(+) is bound at residue K38. NAD(+) is bound by residues 99–101 (GTT) and 125–128 (APNF). H155 serves as the catalytic Proton donor/acceptor. H156 serves as a coordination point for (S)-2,3,4,5-tetrahydrodipicolinate. Catalysis depends on K159, which acts as the Proton donor. 165–166 (GT) contacts (S)-2,3,4,5-tetrahydrodipicolinate.

The protein belongs to the DapB family.

It is found in the cytoplasm. The catalysed reaction is (S)-2,3,4,5-tetrahydrodipicolinate + NAD(+) + H2O = (2S,4S)-4-hydroxy-2,3,4,5-tetrahydrodipicolinate + NADH + H(+). The enzyme catalyses (S)-2,3,4,5-tetrahydrodipicolinate + NADP(+) + H2O = (2S,4S)-4-hydroxy-2,3,4,5-tetrahydrodipicolinate + NADPH + H(+). It functions in the pathway amino-acid biosynthesis; L-lysine biosynthesis via DAP pathway; (S)-tetrahydrodipicolinate from L-aspartate: step 4/4. Its function is as follows. Catalyzes the conversion of 4-hydroxy-tetrahydrodipicolinate (HTPA) to tetrahydrodipicolinate. The chain is 4-hydroxy-tetrahydrodipicolinate reductase from Bacillus thuringiensis subsp. konkukian (strain 97-27).